Reading from the N-terminus, the 319-residue chain is Glutathione synthetase (319 aa).

The 186-residue stretch at 129 to 314 (KLAILNFSRF…VAAMFADAVA (186 aa)) folds into the ATP-grasp domain. 155-211 (LKEHGDIIIKPLDGMGGMGIFRLTEKDPNIGSILETLMQLDSRTIMAQRYIPEIVHG) lines the ATP pocket. Residues glutamate 285 and asparagine 287 each coordinate Mg(2+).

Belongs to the prokaryotic GSH synthase family. Requires Mg(2+) as cofactor. It depends on Mn(2+) as a cofactor.

It catalyses the reaction gamma-L-glutamyl-L-cysteine + glycine + ATP = glutathione + ADP + phosphate + H(+). It participates in sulfur metabolism; glutathione biosynthesis; glutathione from L-cysteine and L-glutamate: step 2/2. The protein is Glutathione synthetase of Neisseria meningitidis serogroup B (strain ATCC BAA-335 / MC58).